We begin with the raw amino-acid sequence, 331 residues long: Probable allantoicase (331 aa).

The protein belongs to the allantoicase family.

The enzyme catalyses allantoate + H2O = (S)-ureidoglycolate + urea. Its pathway is nitrogen metabolism; (S)-allantoin degradation; (S)-ureidoglycolate from allantoate (aminidohydrolase route): step 1/1. This chain is Probable allantoicase, found in Pseudomonas fluorescens (strain SBW25).